The primary structure comprises 67 residues: Preprofallaxidin-1 (67 aa).

The N-terminal stretch at 1-22 (MASLKKSLFLVLFLGMVSLSIC) is a signal peptide. The propeptide occupies 23 to 46 (DKEKREGENEEEEEEHEEESEEKR). Residues 24–46 (KEKREGENEEEEEEHEEESEEKR) form a disordered region. Residues 30-42 (ENEEEEEEHEEES) show a composition bias toward acidic residues.

Expressed by the skin glands.

It localises to the secreted. Functionally, fallaxidin-4.1 shows antibacterial activity against the Gram-positive bacteria L.lactis (MIC=12 uM), M.luteus (MIC=100 uM), S.epidermidis (MIC=100 uM) and S.uberis (MIC=50 uM). No antibacterial activity against the Gram-positive bacteria B.cereus, E.faecalis, L.innocua, S.aureus, or the Gram-negative bacteria E.cloacae and E.coli. Inhibits the formation of NO by neuronal nitric oxide synthase with an IC(50) of 13.3 uM. The protein is Preprofallaxidin-1 of Litoria fallax (Eastern dwarf tree frog).